The following is a 126-amino-acid chain: Fatty acid-binding protein, liver (126 aa).

Alanine 2 bears the N-acetylalanine mark. Cholate is bound by residues lysine 77, histidine 99, and glutamine 101.

This sequence belongs to the calycin superfamily. Fatty-acid binding protein (FABP) family.

The protein localises to the cytoplasm. Binds free fatty acids and their coenzyme A derivatives, bilirubin, and some other small molecules in the cytoplasm. May be involved in intracellular lipid transport. This Aquarana catesbeiana (American bullfrog) protein is Fatty acid-binding protein, liver (fabp1).